A 612-amino-acid chain; its full sequence is Chaperone protein DnaK (612 aa).

At Thr173 the chain carries Phosphothreonine; by autocatalysis. Residues 576–612 (AAKAQQAEGGANAEGKKADDNVVDAEYEEVKDDETKK) are disordered. Residues 578–588 (KAQQAEGGANA) are compositionally biased toward low complexity. The segment covering 596-612 (NVVDAEYEEVKDDETKK) has biased composition (acidic residues).

It belongs to the heat shock protein 70 family.

Functionally, acts as a chaperone. This is Chaperone protein DnaK from Bacillus velezensis (strain DSM 23117 / BGSC 10A6 / LMG 26770 / FZB42) (Bacillus amyloliquefaciens subsp. plantarum).